The chain runs to 225 residues: PKHD-type hydroxylase YbiX (225 aa).

A Fe2OG dioxygenase domain is found at 78–177 (TLSTPLFNRY…RVASFMWIQS (100 aa)). Residues His96, Asp98, and His158 each coordinate Fe cation. Position 168 (Arg168) interacts with 2-oxoglutarate.

It depends on Fe(2+) as a cofactor. Requires L-ascorbate as cofactor.

In Escherichia coli O6:K15:H31 (strain 536 / UPEC), this protein is PKHD-type hydroxylase YbiX.